Consider the following 256-residue polypeptide: Probable cyclic nucleotide phosphodiesterase Fisuc_1441/FSU_1912 (256 aa).

7 residues coordinate Fe cation: aspartate 20, histidine 22, aspartate 59, asparagine 89, histidine 156, histidine 196, and histidine 198. AMP is bound by residues histidine 22, aspartate 59, and 89-90; that span reads NH. Histidine 198 contributes to the AMP binding site.

Belongs to the cyclic nucleotide phosphodiesterase class-III family. Fe(2+) is required as a cofactor.

The polypeptide is Probable cyclic nucleotide phosphodiesterase Fisuc_1441/FSU_1912 (Fibrobacter succinogenes (strain ATCC 19169 / S85)).